Consider the following 152-residue polypeptide: uncharacterized protein (152 aa).

Residues 1–16 (MRKLLISLALAIPVFA) form the signal peptide. Residues 20–135 (NLLQKGYEVY…AVAYWLYHNY (116 aa)) enclose the Cytochrome c domain. Cysteine 33, cysteine 36, and histidine 37 together coordinate heme c.

This is an uncharacterized protein from Aquifex aeolicus (strain VF5).